A 263-amino-acid chain; its full sequence is Phosphonates import ATP-binding protein PhnC 1 (263 aa).

The ABC transporter domain maps to 3-248 (IQVENLWVAF…KEKELYFGEK (246 aa)). ATP is bound at residue 37 to 44 (GPSGAGKS).

This sequence belongs to the ABC transporter superfamily. Phosphonates importer (TC 3.A.1.9.1) family. As to quaternary structure, the complex is composed of two ATP-binding proteins (PhnC), two transmembrane proteins (PhnE) and a solute-binding protein (PhnD).

It is found in the cell inner membrane. It catalyses the reaction phosphonate(out) + ATP + H2O = phosphonate(in) + ADP + phosphate + H(+). Part of the ABC transporter complex PhnCDE involved in phosphonates import. Responsible for energy coupling to the transport system. In Synechococcus sp. (strain JA-2-3B'a(2-13)) (Cyanobacteria bacterium Yellowstone B-Prime), this protein is Phosphonates import ATP-binding protein PhnC 1.